A 339-amino-acid polypeptide reads, in one-letter code: Dihydroorotate dehydrogenase (quinone) (339 aa).

Residues 62 to 66 (AGMDK) and T86 each bind FMN. K66 contacts substrate. 111-115 (NRMGF) is a substrate binding site. Positions 139 and 172 each coordinate FMN. N172 is a binding site for substrate. Catalysis depends on S175, which acts as the Nucleophile. N177 provides a ligand contact to substrate. 2 residues coordinate FMN: K217 and T245. 246-247 (NT) provides a ligand contact to substrate. FMN is bound by residues G268, G297, and 318 to 319 (FS).

The protein belongs to the dihydroorotate dehydrogenase family. Type 2 subfamily. As to quaternary structure, monomer. It depends on FMN as a cofactor.

The protein resides in the cell membrane. It carries out the reaction (S)-dihydroorotate + a quinone = orotate + a quinol. It participates in pyrimidine metabolism; UMP biosynthesis via de novo pathway; orotate from (S)-dihydroorotate (quinone route): step 1/1. Its function is as follows. Catalyzes the conversion of dihydroorotate to orotate with quinone as electron acceptor. The sequence is that of Dihydroorotate dehydrogenase (quinone) from Shewanella halifaxensis (strain HAW-EB4).